The primary structure comprises 103 residues: Large ribosomal subunit protein bL21 (103 aa).

Belongs to the bacterial ribosomal protein bL21 family. Part of the 50S ribosomal subunit. Contacts protein L20.

Its function is as follows. This protein binds to 23S rRNA in the presence of protein L20. The polypeptide is Large ribosomal subunit protein bL21 (Pectobacterium atrosepticum (strain SCRI 1043 / ATCC BAA-672) (Erwinia carotovora subsp. atroseptica)).